Here is a 269-residue protein sequence, read N- to C-terminus: Phosphate import ATP-binding protein PstB 1 (269 aa).

Residues 16 to 255 (FTTQNLDIYY…DRTGKVFGDP (240 aa)) form the ABC transporter domain. Residue 48–55 (GPSGCGKS) coordinates ATP.

Belongs to the ABC transporter superfamily. Phosphate importer (TC 3.A.1.7) family. As to quaternary structure, the complex is composed of two ATP-binding proteins (PstB), two transmembrane proteins (PstC and PstA) and a solute-binding protein (PstS).

The protein resides in the cell inner membrane. It carries out the reaction phosphate(out) + ATP + H2O = ADP + 2 phosphate(in) + H(+). Its function is as follows. Part of the ABC transporter complex PstSACB involved in phosphate import. Responsible for energy coupling to the transport system. This is Phosphate import ATP-binding protein PstB 1 from Synechocystis sp. (strain ATCC 27184 / PCC 6803 / Kazusa).